The chain runs to 189 residues: S-protein homolog 26 (189 aa).

An N-terminal signal peptide occupies residues 1-25 (MISMNRLSILLFVFAFGLTMMSNTA).

This sequence belongs to the plant self-incompatibility (S1) protein family.

The protein localises to the secreted. In Arabidopsis thaliana (Mouse-ear cress), this protein is S-protein homolog 26.